Consider the following 552-residue polypeptide: CTP synthase (552 aa).

Residues 1–270 (MTKYVFVTGG…DRIICDELKL (270 aa)) are amidoligase domain. Serine 13 is a binding site for CTP. Position 13 (serine 13) interacts with UTP. ATP is bound by residues 14–19 (SLGKGI) and aspartate 71. Aspartate 71 and glutamate 144 together coordinate Mg(2+). CTP is bound by residues 151-153 (DIE), 191-196 (KTKPTQ), and lysine 227. UTP-binding positions include 191-196 (KTKPTQ) and lysine 227. The Glutamine amidotransferase type-1 domain maps to 295-547 (TIGMVGKYVD…VEAALANKQA (253 aa)). Residue glycine 356 coordinates L-glutamine. The active-site Nucleophile; for glutamine hydrolysis is the cysteine 383. L-glutamine is bound by residues 384–387 (LGMQ), glutamate 407, and arginine 473. Catalysis depends on residues histidine 520 and glutamate 522.

It belongs to the CTP synthase family. Homotetramer.

It carries out the reaction UTP + L-glutamine + ATP + H2O = CTP + L-glutamate + ADP + phosphate + 2 H(+). It catalyses the reaction L-glutamine + H2O = L-glutamate + NH4(+). The catalysed reaction is UTP + NH4(+) + ATP = CTP + ADP + phosphate + 2 H(+). It functions in the pathway pyrimidine metabolism; CTP biosynthesis via de novo pathway; CTP from UDP: step 2/2. With respect to regulation, allosterically activated by GTP, when glutamine is the substrate; GTP has no effect on the reaction when ammonia is the substrate. The allosteric effector GTP functions by stabilizing the protein conformation that binds the tetrahedral intermediate(s) formed during glutamine hydrolysis. Inhibited by the product CTP, via allosteric rather than competitive inhibition. Its function is as follows. Catalyzes the ATP-dependent amination of UTP to CTP with either L-glutamine or ammonia as the source of nitrogen. Regulates intracellular CTP levels through interactions with the four ribonucleotide triphosphates. The polypeptide is CTP synthase (Burkholderia vietnamiensis (strain G4 / LMG 22486) (Burkholderia cepacia (strain R1808))).